The primary structure comprises 320 residues: HPr kinase/phosphorylase (320 aa).

Residues histidine 141 and lysine 162 contribute to the active site. An ATP-binding site is contributed by 156–163; that stretch reads GHSGLGKS. Position 163 (serine 163) interacts with Mg(2+). Aspartate 180 acts as the Proton acceptor; for phosphorylation activity. Proton donor; for dephosphorylation activity in catalysis. Positions 204–213 are important for the catalytic mechanism of both phosphorylation and dephosphorylation; sequence LEVRGLGILN. Glutamate 205 lines the Mg(2+) pocket. The active site involves arginine 248. Residues 269-274 are important for the catalytic mechanism of dephosphorylation; that stretch reads PVAVGR.

The protein belongs to the HPrK/P family. In terms of assembly, homohexamer. It depends on Mg(2+) as a cofactor.

It catalyses the reaction [HPr protein]-L-serine + ATP = [HPr protein]-O-phospho-L-serine + ADP + H(+). The catalysed reaction is [HPr protein]-O-phospho-L-serine + phosphate + H(+) = [HPr protein]-L-serine + diphosphate. Its function is as follows. Catalyzes the ATP- as well as the pyrophosphate-dependent phosphorylation of a specific serine residue in HPr, a phosphocarrier protein of the phosphoenolpyruvate-dependent sugar phosphotransferase system (PTS). HprK/P also catalyzes the pyrophosphate-producing, inorganic phosphate-dependent dephosphorylation (phosphorolysis) of seryl-phosphorylated HPr (P-Ser-HPr). This is HPr kinase/phosphorylase from Neisseria meningitidis serogroup A / serotype 4A (strain DSM 15465 / Z2491).